The chain runs to 499 residues: BTB/POZ domain-containing protein 16 (499 aa).

The region spanning 143 to 199 is the BTB domain; it reads INDPLVTREAFATALKNLYMQEVKICLDDVLGVLAAAHILQFGSLFQRCVTVMMSGL.

The polypeptide is BTB/POZ domain-containing protein 16 (BTBD16) (Bos taurus (Bovine)).